A 259-amino-acid chain; its full sequence is Putative deoxyribonuclease TATDN1 homolog (259 aa).

A divalent metal cation contacts are provided by Glu82, His116, His138, and Asp186.

It belongs to the metallo-dependent hydrolases superfamily. TatD-type hydrolase family. A divalent metal cation is required as a cofactor.

It localises to the nucleus. Putative deoxyribonuclease. The sequence is that of Putative deoxyribonuclease TATDN1 homolog from Vairimorpha ceranae (strain BRL01) (Microsporidian parasite).